Here is a 595-residue protein sequence, read N- to C-terminus: Probable Xaa-Pro aminopeptidase CHGG_02942 (595 aa).

The segment at 51–76 (KSGPSSSNLSPSTLSTEKTSSDSSGV) is disordered. Positions 52–66 (SGPSSSNLSPSTLST) are enriched in low complexity. Mn(2+) contacts are provided by D334, D345, E541, and E563.

This sequence belongs to the peptidase M24B family. The cofactor is Mn(2+).

It carries out the reaction Release of any N-terminal amino acid, including proline, that is linked to proline, even from a dipeptide or tripeptide.. In terms of biological role, catalyzes the removal of a penultimate prolyl residue from the N-termini of peptides. In Chaetomium globosum (strain ATCC 6205 / CBS 148.51 / DSM 1962 / NBRC 6347 / NRRL 1970) (Soil fungus), this protein is Probable Xaa-Pro aminopeptidase CHGG_02942.